The following is a 500-amino-acid chain: Probable cytosol aminopeptidase (500 aa).

2 residues coordinate Mn(2+): Lys264 and Asp269. The active site involves Lys276. Asp287, Asp346, and Glu348 together coordinate Mn(2+). Arg350 is a catalytic residue.

It belongs to the peptidase M17 family. Requires Mn(2+) as cofactor.

It localises to the cytoplasm. The enzyme catalyses Release of an N-terminal amino acid, Xaa-|-Yaa-, in which Xaa is preferably Leu, but may be other amino acids including Pro although not Arg or Lys, and Yaa may be Pro. Amino acid amides and methyl esters are also readily hydrolyzed, but rates on arylamides are exceedingly low.. It carries out the reaction Release of an N-terminal amino acid, preferentially leucine, but not glutamic or aspartic acids.. Its function is as follows. Presumably involved in the processing and regular turnover of intracellular proteins. Catalyzes the removal of unsubstituted N-terminal amino acids from various peptides. The polypeptide is Probable cytosol aminopeptidase (Chlamydia felis (strain Fe/C-56) (Chlamydophila felis)).